Reading from the N-terminus, the 116-residue chain is Large ribosomal subunit protein bL17 (116 aa).

This sequence belongs to the bacterial ribosomal protein bL17 family. As to quaternary structure, part of the 50S ribosomal subunit. Contacts protein L32.

In Trichodesmium erythraeum (strain IMS101), this protein is Large ribosomal subunit protein bL17.